The primary structure comprises 144 residues: Ribosomal RNA large subunit methyltransferase H (144 aa).

Residues leucine 63, glycine 92, and 111–116 (LSPLTF) contribute to the S-adenosyl-L-methionine site.

The protein belongs to the RNA methyltransferase RlmH family. As to quaternary structure, homodimer.

Its subcellular location is the cytoplasm. The catalysed reaction is pseudouridine(1915) in 23S rRNA + S-adenosyl-L-methionine = N(3)-methylpseudouridine(1915) in 23S rRNA + S-adenosyl-L-homocysteine + H(+). In terms of biological role, specifically methylates the pseudouridine at position 1915 (m3Psi1915) in 23S rRNA. The sequence is that of Ribosomal RNA large subunit methyltransferase H from Synechococcus sp. (strain CC9902).